The primary structure comprises 585 residues: Arginine--tRNA ligase (585 aa).

A 'HIGH' region motif is present at residues Ala-131–His-141.

The protein belongs to the class-I aminoacyl-tRNA synthetase family. In terms of assembly, monomer.

The protein localises to the cytoplasm. The enzyme catalyses tRNA(Arg) + L-arginine + ATP = L-arginyl-tRNA(Arg) + AMP + diphosphate. This Chelativorans sp. (strain BNC1) protein is Arginine--tRNA ligase.